The chain runs to 255 residues: Thiazole synthase (255 aa).

Lys96 serves as the catalytic Schiff-base intermediate with DXP. 1-deoxy-D-xylulose 5-phosphate-binding positions include Gly157, 183–184, and 205–206; these read AG and NT.

The protein belongs to the ThiG family. In terms of assembly, homotetramer. Forms heterodimers with either ThiH or ThiS.

The protein localises to the cytoplasm. It carries out the reaction [ThiS sulfur-carrier protein]-C-terminal-Gly-aminoethanethioate + 2-iminoacetate + 1-deoxy-D-xylulose 5-phosphate = [ThiS sulfur-carrier protein]-C-terminal Gly-Gly + 2-[(2R,5Z)-2-carboxy-4-methylthiazol-5(2H)-ylidene]ethyl phosphate + 2 H2O + H(+). It functions in the pathway cofactor biosynthesis; thiamine diphosphate biosynthesis. Functionally, catalyzes the rearrangement of 1-deoxy-D-xylulose 5-phosphate (DXP) to produce the thiazole phosphate moiety of thiamine. Sulfur is provided by the thiocarboxylate moiety of the carrier protein ThiS. In vitro, sulfur can be provided by H(2)S. This is Thiazole synthase from Staphylococcus epidermidis (strain ATCC 35984 / DSM 28319 / BCRC 17069 / CCUG 31568 / BM 3577 / RP62A).